The sequence spans 569 residues: MSASKEIKSFLWTQSLRRELSGYCSNIKLQVVKDAQALLHGLDFSEVSNVQRLMRKERRDDNDLKRLRDLNQAVNNLVELKSTQQKSILRVGTLTSDDLLILAADLEKLKSKVIRTERPLSAGVYMGNLSSQQLDQRRALLNMIGMSGGNQGARAGRDGVVRVWDVKNAELLNNQFGTMPSLTLACLTKQGQVDLNDAVQALTDLGLIYTAKYPNTSDLDRLTQSHPILNMIDTKKSSLNISGYNFSLGAAVKAGACMLDGGNMLETIKVSPQTMDGILKSILKVKKALGMFISDTPGERNPYENILYKICLSGDGWPYIASRTSITGRAWENTVVDLESDGKPQKADSNNSSKSLQSAGFTAGLTYSQLMTLKDAMLQLDPNAKTWMDIEGRPEDPVEIALYQPSSGCYIHFFREPTDLKQFKQDAKYSHGIDVTDLFATQPGLTSAVIDALPRNMVITCQGSDDIRKLLESQGRKDIKLIDIALSKTDSRKYENAVWDQYKDLCHMHTGVVVEKKKRGGKEEITPHCALMDCIMFDAAVSGGLNTSVLRAVLPRDMVFRTSTPRVVL.

The binding site for the cap structure m7GTP stretch occupies residues 54-241; sequence MRKERRDDND…IDTKKSSLNI (188 aa). 2 residues coordinate Mn(2+): D389 and E391. E399, C506, H509, and C529 together coordinate Zn(2+). A Mn(2+)-binding site is contributed by D533.

The protein belongs to the arenaviridae nucleocapsid protein family. As to quaternary structure, homomultimerizes to form the nucleocapsid. Binds to viral genomic RNA. Interacts with glycoprotein G2. Interacts with protein Z; this interaction probably directs the encapsidated genome to budding sites. Interacts with protein L; this interaction does not interfere with Z-L interaction. Interacts with host IKBKE (via Protein kinase domain); the interaction inhibits IKBKE kinase activity.

The protein localises to the virion. Its subcellular location is the host cytoplasm. Functionally, encapsidates the genome, protecting it from nucleases. The encapsidated genomic RNA is termed the nucleocapsid (NC). Serves as template for viral transcription and replication. The increased presence of protein N in host cell does not seem to trigger the switch from transcription to replication as observed in other negative strain RNA viruses. Through the interaction with host IKBKE, strongly inhibits the phosphorylation and nuclear translocation of host IRF3, a protein involved in interferon activation pathway, leading to the inhibition of interferon-beta and IRF3-dependent promoters activation. Also encodes a functional 3'-5' exoribonuclease that degrades preferentially dsRNA substrates and thereby participates in the suppression of interferon induction. The chain is Nucleoprotein from Lassa virus (strain Mouse/Sierra Leone/Josiah/1976) (LASV).